A 136-amino-acid chain; its full sequence is Large-conductance mechanosensitive channel (136 aa).

The next 2 helical transmembrane spans lie at 10–30 (FAMR…AAFG) and 76–96 (GVFI…FMAI).

The protein belongs to the MscL family. As to quaternary structure, homopentamer.

The protein resides in the cell inner membrane. Functionally, channel that opens in response to stretch forces in the membrane lipid bilayer. May participate in the regulation of osmotic pressure changes within the cell. This chain is Large-conductance mechanosensitive channel, found in Escherichia coli O127:H6 (strain E2348/69 / EPEC).